The sequence spans 192 residues: Large ribosomal subunit protein bL9 (192 aa).

A disordered region spans residues 172 to 192 (DALRPEDFFDPEADGIDEDEA). The span at 179 to 192 (FFDPEADGIDEDEA) shows a compositional bias: acidic residues.

This sequence belongs to the bacterial ribosomal protein bL9 family.

Functionally, binds to the 23S rRNA. The sequence is that of Large ribosomal subunit protein bL9 from Rhizobium etli (strain CIAT 652).